The sequence spans 390 residues: Putative 2-isopropylmalate synthase (390 aa).

The Pyruvate carboxyltransferase domain occupies 5 to 267 (IIIFDTTLRD…KTNIKYQEIY (263 aa)). Mn(2+) contacts are provided by D14, H202, H204, and N238.

The protein belongs to the alpha-IPM synthase/homocitrate synthase family. LeuA type 1 subfamily. As to quaternary structure, homodimer. The cofactor is Mn(2+).

It localises to the cytoplasm. The catalysed reaction is 3-methyl-2-oxobutanoate + acetyl-CoA + H2O = (2S)-2-isopropylmalate + CoA + H(+). It participates in amino-acid biosynthesis; L-leucine biosynthesis; L-leucine from 3-methyl-2-oxobutanoate: step 1/4. Catalyzes the condensation of the acetyl group of acetyl-CoA with 3-methyl-2-oxobutanoate (2-ketoisovalerate) to form 3-carboxy-3-hydroxy-4-methylpentanoate (2-isopropylmalate). This is Putative 2-isopropylmalate synthase from Buchnera aphidicola subsp. Baizongia pistaciae (strain Bp).